The primary structure comprises 226 residues: UPF0111 protein AF_1799 (226 aa).

The protein belongs to the UPF0111 family.

This Archaeoglobus fulgidus (strain ATCC 49558 / DSM 4304 / JCM 9628 / NBRC 100126 / VC-16) protein is UPF0111 protein AF_1799.